Consider the following 441-residue polypeptide: MTLAFGDWIVHRRWYAGRSRELVSAEPAVVTPLRDDLDHILLDVTYTDGTVERYQLVVRWADSPVAGFGEAATIGTALGPQGERIAYDALFDPDAARHLLRLVDASATVADLRFTREPGATLPLYAPPKVSSAEQSNTSVIFGKDAMLKVFRRVTPGINPDIELNRVLAQAGNRHVARLLGSFETSWAGPGTDRCALGMVTAFAANSAEGWDMATASAREMFADVVGSDFADESYRLGNAVASVHATLAEALGTSTEPFPVDTVLARLQSAARSAPELAGRAAAVEERYRRLDGRAITVQRVHGDLHLGQVLRTPDDWLLIDFEGEPGQPLDERRRPDSPLRDVAGVLRSFEYAAYQKLVELAPEQDADGRLADRARNWVDRNSAAFCAGYAAVAGDDPRRDGDVLAAYELDKAVYEAAYEARFRPSWLPIPMRSIDRILG.

Belongs to the aminoglycoside phosphotransferase family. Monomer.

It carries out the reaction D-maltose + ATP = alpha-maltose 1-phosphate + ADP + H(+). It functions in the pathway glycan biosynthesis; glycogen biosynthesis. Its function is as follows. Catalyzes the ATP-dependent phosphorylation of maltose to maltose 1-phosphate. Is involved in a branched alpha-glucan biosynthetic pathway from trehalose, together with TreS, GlgE and GlgB. This Mycolicibacterium vanbaalenii (strain DSM 7251 / JCM 13017 / BCRC 16820 / KCTC 9966 / NRRL B-24157 / PYR-1) (Mycobacterium vanbaalenii) protein is Maltokinase (mak).